We begin with the raw amino-acid sequence, 433 residues long: Steroid C26-monooxygenase (433 aa).

Gly-202 is a binding site for substrate. Heme is bound at residue Cys-377.

The protein belongs to the cytochrome P450 family. Heme is required as a cofactor.

It carries out the reaction cholest-4-en-3-one + 6 reduced [2Fe-2S]-[ferredoxin] + 3 O2 + 5 H(+) = (25S)-3-oxocholest-4-en-26-oate + 6 oxidized [2Fe-2S]-[ferredoxin] + 4 H2O. It participates in steroid metabolism; cholesterol degradation. Its function is as follows. Involved in the utilization of cholesterol as the sole carbon and energy source by degrading the side chain during infection. Primarily catalyzes the sequential oxidation of the terminal methyl of cholest-4-en-3-one into (25S)-26-hydroxycholest-4-en-3-one (alcohol), (25S)-26-oxocholest-4-en-3-one (aldehyde), to finally yield the carboxylic acid (25S)-3-oxocholest-4-en-26-oate. Also able to sequentially oxidize cholesterol itself, not only cholest-4-en-3-one. This is Steroid C26-monooxygenase (cyp125) from Mycobacterium bovis (strain ATCC BAA-935 / AF2122/97).